A 472-amino-acid chain; its full sequence is Poly(A) polymerase catalytic subunit (472 aa).

Active-site residues include aspartate 194 and aspartate 196.

This sequence belongs to the poxviridae poly(A) polymerase catalytic subunit family. Heterodimer of a large (catalytic) subunit and a small (regulatory) subunit.

It carries out the reaction RNA(n) + ATP = RNA(n)-3'-adenine ribonucleotide + diphosphate. In terms of biological role, polymerase that creates the 3'-poly(A) tail of mRNA's. The polypeptide is Poly(A) polymerase catalytic subunit (PAPL) (Fowlpox virus (strain NVSL) (FPV)).